The chain runs to 236 residues: Snake venom serine protease pallase (236 aa).

The region spanning 1 to 227 is the Peptidase S1 domain; sequence VIGGDECNIN…HLDWIENIIA (227 aa). 6 disulfides stabilise this stretch: C7-C139, C26-C42, C74-C234, C118-C188, C150-C167, and C178-C203. Active-site charge relay system residues include H41 and D86. Catalysis depends on S182, which acts as the Charge relay system.

It belongs to the peptidase S1 family. Snake venom subfamily. Monomer. In terms of tissue distribution, expressed by the venom gland.

Its subcellular location is the secreted. Snake venom serine protease that may act in the hemostasis system of the prey. This chain is Snake venom serine protease pallase, found in Gloydius halys (Chinese water mocassin).